The following is a 220-amino-acid chain: Miraculin (220 aa).

Positions 1–29 are cleaved as a signal peptide; that stretch reads MKELTMLSLSFFFVSALLAAAANPLLSAA. A glycan (N-linked (GlcNAc...) asparagine) is linked at Asn71. Disulfide bonds link Cys76–Cys121, Cys177–Cys188, and Cys181–Cys184. Asn215 carries N-linked (GlcNAc...) asparagine glycosylation.

It belongs to the protease inhibitor I3 (leguminous Kunitz-type inhibitor) family. As to quaternary structure, homotetramer; dimer of homodimer. In terms of processing, glycosylated; contains as much as 13,9% of sugars (glucosamine, mannose, galactose, xylose, and fucose). Expressed in fruit pulp after pollination. Not expressed in seeds, stems or leaves.

Functionally, miraculin has the property of modifying a sour taste into a sweet taste. This alteration of taste perception persists for many minutes. The sequence is that of Miraculin from Synsepalum dulcificum (Miracle fruit).